Here is an 848-residue protein sequence, read N- to C-terminus: Leucine--tRNA ligase (848 aa).

A 'HIGH' region motif is present at residues 41 to 51 (PYPSGRIHMGH). Positions 619-623 (KMSKS) match the 'KMSKS' region motif. Lysine 622 serves as a coordination point for ATP.

Belongs to the class-I aminoacyl-tRNA synthetase family.

It is found in the cytoplasm. It catalyses the reaction tRNA(Leu) + L-leucine + ATP = L-leucyl-tRNA(Leu) + AMP + diphosphate. In Roseobacter denitrificans (strain ATCC 33942 / OCh 114) (Erythrobacter sp. (strain OCh 114)), this protein is Leucine--tRNA ligase.